The sequence spans 336 residues: 4-hydroxythreonine-4-phosphate dehydrogenase (336 aa).

Substrate is bound by residues His142 and Thr143. A divalent metal cation contacts are provided by His172, His217, and His274. Residues Lys282, Asn291, and Arg300 each coordinate substrate.

Belongs to the PdxA family. Homodimer. The cofactor is Zn(2+). Mg(2+) serves as cofactor. Requires Co(2+) as cofactor.

The protein resides in the cytoplasm. The catalysed reaction is 4-(phosphooxy)-L-threonine + NAD(+) = 3-amino-2-oxopropyl phosphate + CO2 + NADH. The protein operates within cofactor biosynthesis; pyridoxine 5'-phosphate biosynthesis; pyridoxine 5'-phosphate from D-erythrose 4-phosphate: step 4/5. Functionally, catalyzes the NAD(P)-dependent oxidation of 4-(phosphooxy)-L-threonine (HTP) into 2-amino-3-oxo-4-(phosphooxy)butyric acid which spontaneously decarboxylates to form 3-amino-2-oxopropyl phosphate (AHAP). The polypeptide is 4-hydroxythreonine-4-phosphate dehydrogenase (Trichlorobacter lovleyi (strain ATCC BAA-1151 / DSM 17278 / SZ) (Geobacter lovleyi)).